The sequence spans 433 residues: C2H2 type master regulator of conidiophore development brlA (433 aa).

3 disordered regions span residues 24-49 (SDCPSMTSSFSPLDSPTPTPTSLYSQ), 240-269 (KSHTPSTPHRSVSMGTPSGSDTPVSRISGH), and 286-306 (MMQRHRQPSRKPSKKQLLRSN). The segment covering 30–49 (TSSFSPLDSPTPTPTSLYSQ) has biased composition (low complexity). Over residues 240 to 264 (KSHTPSTPHRSVSMGTPSGSDTPVS) the composition is skewed to polar residues. Residues 288–302 (QRHRQPSRKPSKKQL) show a composition bias toward basic residues. 2 C2H2-type zinc fingers span residues 321-345 (FKCKEPGCKGRFKRQEHLKRHMKSH) and 351-376 (HVCWVPGCHRAFSRSDNLNAHYTKTH). A disordered region spans residues 391-423 (ETSQDFDPDFRGQLTPDGRPIYGSKLEDSMPDC).

Its subcellular location is the nucleus. Its function is as follows. BrlA, abaA and wetA are pivotal regulators of conidiophore development and conidium maturation. They act individually and together to regulate their own expression and that of numerous other sporulation-specific genes. Binds promoters of target genes at brlA response elements (BREs) containing the conserved sequence 5'-(C/A)(A/G)AGGG(G/A)-3'. Regulates genes involved in conidiogenesis. This Penicillium digitatum (strain PHI26 / CECT 20796) (Green mold) protein is C2H2 type master regulator of conidiophore development brlA.